The chain runs to 189 residues: Thermostable direct hemolysin (189 aa).

The N-terminal stretch at 1–24 (MKYRHLAKKSFLFIFMLAAFKTFA) is a signal peptide. Cysteine 175 and cysteine 185 are disulfide-bonded.

It belongs to the TDH hemolysin family. Homodimer.

Bacterial hemolysins are exotoxins that attack blood cell membranes and cause cell rupture by mechanisms not clearly defined. In Grimontia hollisae (Vibrio hollisae), this protein is Thermostable direct hemolysin (tdh).